The chain runs to 160 residues: Transcriptional regulator MraZ (160 aa).

2 SpoVT-AbrB domains span residues 5–51 and 80–123; these read TFEK…GKAL and MAKL…EREA.

This sequence belongs to the MraZ family. In terms of assembly, forms oligomers.

The protein localises to the cytoplasm. The protein resides in the nucleoid. The chain is Transcriptional regulator MraZ from Phenylobacterium zucineum (strain HLK1).